Reading from the N-terminus, the 358-residue chain is DNA polymerase IV (358 aa).

In terms of domain architecture, UmuC spans 4–185 (IIHIDMDCYF…LPLIKIPGVG (182 aa)). Residues aspartate 8 and aspartate 103 each coordinate Mg(2+). The active site involves glutamate 104.

This sequence belongs to the DNA polymerase type-Y family. Monomer. Mg(2+) is required as a cofactor.

It is found in the cytoplasm. The enzyme catalyses DNA(n) + a 2'-deoxyribonucleoside 5'-triphosphate = DNA(n+1) + diphosphate. Its function is as follows. Poorly processive, error-prone DNA polymerase involved in untargeted mutagenesis. Copies undamaged DNA at stalled replication forks, which arise in vivo from mismatched or misaligned primer ends. These misaligned primers can be extended by PolIV. Exhibits no 3'-5' exonuclease (proofreading) activity. May be involved in translesional synthesis, in conjunction with the beta clamp from PolIII. This Shewanella denitrificans (strain OS217 / ATCC BAA-1090 / DSM 15013) protein is DNA polymerase IV.